A 408-amino-acid chain; its full sequence is Aminoacylase-1B (408 aa).

His-80 lines the Zn(2+) pocket. The active site involves Asp-82. Zn(2+) is bound at residue Asp-113. Glu-147 acts as the Proton acceptor in catalysis. 3 residues coordinate Zn(2+): Glu-148, Glu-175, and His-373. Ser-408 is modified (phosphoserine).

The protein belongs to the peptidase M20A family. Homodimer. It depends on Zn(2+) as a cofactor. As to expression, expressed in kidney.

It is found in the cytoplasm. The catalysed reaction is an N-acyl-L-amino acid + H2O = an L-alpha-amino acid + a carboxylate. It catalyses the reaction an N-acetyl-L-cysteine-S-conjugate + H2O = an S-substituted L-cysteine + acetate. Its function is as follows. Involved in the hydrolysis of N-acylated or N-acetylated amino acids (except L-aspartate). The polypeptide is Aminoacylase-1B (Acy1b) (Rattus norvegicus (Rat)).